The chain runs to 128 residues: 3-aminoacrylate deaminase RutC (128 aa).

Belongs to the RutC family. As to quaternary structure, homotrimer.

The enzyme catalyses (Z)-3-aminoacrylate + H2O + H(+) = 3-oxopropanoate + NH4(+). Functionally, involved in pyrimidine catabolism. Catalyzes the deamination of 3-aminoacrylate to malonic semialdehyde, a reaction that can also occur spontaneously. RutC may facilitate the reaction and modulate the metabolic fitness, rather than catalyzing essential functions. In Escherichia coli O111:H- (strain 11128 / EHEC), this protein is 3-aminoacrylate deaminase RutC.